We begin with the raw amino-acid sequence, 359 residues long: uncharacterized protein (359 aa).

A PINc domain is found at 163–275; it reads VVDTSCIIDG…SKVANLQKVQ (113 aa). Mg(2+) contacts are provided by aspartate 165 and aspartate 244. Positions 289 to 350 constitute a TRAM domain; that stretch reads IYLPGDSLEL…LQTSAGRMIF (62 aa).

This sequence belongs to the ycf81 family. In the central section; belongs to the PINc/VapC protein family. Requires Mg(2+) as cofactor.

An RNase. This is an uncharacterized protein from Synechocystis sp. (strain ATCC 27184 / PCC 6803 / Kazusa).